The primary structure comprises 321 residues: Lipoyl synthase (321 aa).

[4Fe-4S] cluster-binding residues include Cys68, Cys73, Cys79, Cys94, Cys98, Cys101, and Ser308. In terms of domain architecture, Radical SAM core spans 80–297 (FNHGTATFMI…KELAESIGFT (218 aa)).

This sequence belongs to the radical SAM superfamily. Lipoyl synthase family. The cofactor is [4Fe-4S] cluster.

It is found in the cytoplasm. It carries out the reaction [[Fe-S] cluster scaffold protein carrying a second [4Fe-4S](2+) cluster] + N(6)-octanoyl-L-lysyl-[protein] + 2 oxidized [2Fe-2S]-[ferredoxin] + 2 S-adenosyl-L-methionine + 4 H(+) = [[Fe-S] cluster scaffold protein] + N(6)-[(R)-dihydrolipoyl]-L-lysyl-[protein] + 4 Fe(3+) + 2 hydrogen sulfide + 2 5'-deoxyadenosine + 2 L-methionine + 2 reduced [2Fe-2S]-[ferredoxin]. It participates in protein modification; protein lipoylation via endogenous pathway; protein N(6)-(lipoyl)lysine from octanoyl-[acyl-carrier-protein]: step 2/2. Its function is as follows. Catalyzes the radical-mediated insertion of two sulfur atoms into the C-6 and C-8 positions of the octanoyl moiety bound to the lipoyl domains of lipoate-dependent enzymes, thereby converting the octanoylated domains into lipoylated derivatives. The polypeptide is Lipoyl synthase (Shewanella pealeana (strain ATCC 700345 / ANG-SQ1)).